Reading from the N-terminus, the 157-residue chain is Protein-export protein SecB (157 aa).

It belongs to the SecB family. Homotetramer, a dimer of dimers. One homotetramer interacts with 1 SecA dimer.

Its subcellular location is the cytoplasm. Functionally, one of the proteins required for the normal export of preproteins out of the cell cytoplasm. It is a molecular chaperone that binds to a subset of precursor proteins, maintaining them in a translocation-competent state. It also specifically binds to its receptor SecA. The polypeptide is Protein-export protein SecB (Tolumonas auensis (strain DSM 9187 / NBRC 110442 / TA 4)).